Here is a 194-residue protein sequence, read N- to C-terminus: Large ribosomal subunit protein bL9 (194 aa).

Residues 166-184 show a composition bias toward low complexity; the sequence is AENQAQADEQAGELAAAAA. A disordered region spans residues 166–194; sequence AENQAQADEQAGELAAAAAERGDMGGDEE. Over residues 185–194 the composition is skewed to basic and acidic residues; that stretch reads ERGDMGGDEE.

This sequence belongs to the bacterial ribosomal protein bL9 family.

In terms of biological role, binds to the 23S rRNA. This Hyphomonas neptunium (strain ATCC 15444) protein is Large ribosomal subunit protein bL9.